The chain runs to 299 residues: Inosose dehydratase (299 aa).

Belongs to the IolE/MocC family. Glutathione serves as cofactor. Requires Co(2+) as cofactor. It depends on Mn(2+) as a cofactor.

The catalysed reaction is scyllo-inosose = 3D-3,5/4-trihydroxycyclohexane-1,2-dione + H2O. Functionally, catalyzes the dehydration of inosose (2-keto-myo-inositol, 2KMI or 2,4,6/3,5-pentahydroxycyclohexanone) to 3D-(3,5/4)-trihydroxycyclohexane-1,2-dione (D-2,3-diketo-4-deoxy-epi-inositol). In Klebsiella pneumoniae subsp. pneumoniae (strain ATCC 700721 / MGH 78578), this protein is Inosose dehydratase.